The primary structure comprises 355 residues: DNA polymerase IV (355 aa).

Positions 7 to 188 constitute a UmuC domain; sequence IIHIDMDCFY…LPVRKLFGVG (182 aa). Positions 11 and 106 each coordinate Mg(2+). Glu-107 is a catalytic residue.

The protein belongs to the DNA polymerase type-Y family. Monomer. Mg(2+) serves as cofactor.

The protein resides in the cytoplasm. It carries out the reaction DNA(n) + a 2'-deoxyribonucleoside 5'-triphosphate = DNA(n+1) + diphosphate. In terms of biological role, poorly processive, error-prone DNA polymerase involved in untargeted mutagenesis. Copies undamaged DNA at stalled replication forks, which arise in vivo from mismatched or misaligned primer ends. These misaligned primers can be extended by PolIV. Exhibits no 3'-5' exonuclease (proofreading) activity. May be involved in translesional synthesis, in conjunction with the beta clamp from PolIII. The polypeptide is DNA polymerase IV (Legionella pneumophila (strain Corby)).